Reading from the N-terminus, the 194-residue chain is Peptidyl-tRNA hydrolase (194 aa).

Tyr-16 lines the tRNA pocket. The Proton acceptor role is filled by His-21. Phe-67, Asn-69, and Asn-115 together coordinate tRNA.

This sequence belongs to the PTH family. As to quaternary structure, monomer.

It is found in the cytoplasm. It catalyses the reaction an N-acyl-L-alpha-aminoacyl-tRNA + H2O = an N-acyl-L-amino acid + a tRNA + H(+). Hydrolyzes ribosome-free peptidyl-tRNAs (with 1 or more amino acids incorporated), which drop off the ribosome during protein synthesis, or as a result of ribosome stalling. In terms of biological role, catalyzes the release of premature peptidyl moieties from peptidyl-tRNA molecules trapped in stalled 50S ribosomal subunits, and thus maintains levels of free tRNAs and 50S ribosomes. In Shigella flexneri, this protein is Peptidyl-tRNA hydrolase.